The chain runs to 92 residues: N(2)-fixation sustaining protein CowN (92 aa).

Belongs to the CowN family.

Its function is as follows. Is required to sustain N(2)-dependent growth in the presence of low levels of carbon monoxide (CO). Probably acts by protecting the N(2) fixation ability of the nitrogenase complex, which is inactivated in the presence of CO. This is N(2)-fixation sustaining protein CowN from Rhodopseudomonas palustris (strain BisA53).